A 372-amino-acid polypeptide reads, in one-letter code: tRNA-specific 2-thiouridylase MnmA (372 aa).

Residues 7-14 (GLSGGVDS) and methionine 33 each bind ATP. The segment at 104-106 (NPD) is interaction with target base in tRNA. The active-site Nucleophile is cysteine 109. A disulfide bond links cysteine 109 and cysteine 202. ATP is bound at residue glycine 134. Residues 152–154 (KDQ) form an interaction with tRNA region. The active-site Cysteine persulfide intermediate is cysteine 202. The tract at residues 310–311 (RY) is interaction with tRNA.

It belongs to the MnmA/TRMU family.

It is found in the cytoplasm. It carries out the reaction S-sulfanyl-L-cysteinyl-[protein] + uridine(34) in tRNA + AH2 + ATP = 2-thiouridine(34) in tRNA + L-cysteinyl-[protein] + A + AMP + diphosphate + H(+). In terms of biological role, catalyzes the 2-thiolation of uridine at the wobble position (U34) of tRNA, leading to the formation of s(2)U34. The protein is tRNA-specific 2-thiouridylase MnmA of Mesomycoplasma hyopneumoniae (strain 7448) (Mycoplasma hyopneumoniae).